The sequence spans 330 residues: MRSTLVTGLIAGLLSQQAAAHATFQALWVDGADYGSQCARVPPSNSPVTDVTSNAMRCNTGTSPVAKKCPVKAGSTVTVEMHQQANDRSCSSEAIGGAHYGPVLVYMSKVSDAASADGSSGWFKIFEDTWAKKPSSSSGDDDFWGVKDLNSCCGKMQVKIPSDIPAGDYLLRAEVIALHTAASAGGAQLYMTCYQISVTGGGSATPATVSFPGAYKSSDPGILVDIHSAMSTYVAPGPAVYSGGSSKKAGSGCVGCESTCKVGSGPTGTASAVPVASTSAAAGGGGGGGSGGCSVAKYQQCGGTGYTGCTSCASGSTCSAVSPPYYSQCV.

The first 20 residues, Met-1–Ala-20, serve as a signal peptide directing secretion. Cu(2+) contacts are provided by His-21 and His-99. A disulfide bridge connects residues Cys-58 and Cys-193. 2 residues coordinate O2: His-179 and Gln-188. Tyr-190 is a Cu(2+) binding site. The region spanning Cys-293 to Val-330 is the CBM1 domain.

The protein belongs to the polysaccharide monooxygenase AA9 family. Cu(2+) serves as cofactor.

Its subcellular location is the secreted. The enzyme catalyses [(1-&gt;4)-beta-D-glucosyl]n+m + reduced acceptor + O2 = 4-dehydro-beta-D-glucosyl-[(1-&gt;4)-beta-D-glucosyl]n-1 + [(1-&gt;4)-beta-D-glucosyl]m + acceptor + H2O.. Functionally, lytic polysaccharide monooxygenase (LPMO) that depolymerizes crystalline and amorphous polysaccharides via the oxidation of scissile alpha- or beta-(1-4)-glycosidic bonds, yielding exclusively C1 oxidation products. Catalysis by LPMOs requires the reduction of the active-site copper from Cu(II) to Cu(I) by a reducing agent and H(2)O(2) or O(2) as a cosubstrate. The chain is AA9 family lytic polysaccharide monooxygenase E (gh61-5) from Neurospora crassa (strain ATCC 24698 / 74-OR23-1A / CBS 708.71 / DSM 1257 / FGSC 987).